The following is a 295-amino-acid chain: Bifunctional protein FolD (295 aa).

Residues 172 to 174 (GRS), Ser-197, and Ile-238 each bind NADP(+).

The protein belongs to the tetrahydrofolate dehydrogenase/cyclohydrolase family. In terms of assembly, homodimer.

The catalysed reaction is (6R)-5,10-methylene-5,6,7,8-tetrahydrofolate + NADP(+) = (6R)-5,10-methenyltetrahydrofolate + NADPH. It catalyses the reaction (6R)-5,10-methenyltetrahydrofolate + H2O = (6R)-10-formyltetrahydrofolate + H(+). It participates in one-carbon metabolism; tetrahydrofolate interconversion. In terms of biological role, catalyzes the oxidation of 5,10-methylenetetrahydrofolate to 5,10-methenyltetrahydrofolate and then the hydrolysis of 5,10-methenyltetrahydrofolate to 10-formyltetrahydrofolate. The polypeptide is Bifunctional protein FolD (Rickettsia akari (strain Hartford)).